The sequence spans 366 residues: Galactoside alpha-(1,2)-fucosyltransferase 1 (366 aa).

Residues 1 to 8 (MWPPSHRQ) lie on the Cytoplasmic side of the membrane. The chain crosses the membrane as a helical; Signal-anchor for type II membrane protein span at residues 9-25 (LCRAFLLVCVFSVISFF). At 26 to 366 (LHIHQDSFPH…LSPLWTLAKP (341 aa)) the chain is on the lumenal side. Asparagine 66, asparagine 302, and asparagine 328 each carry an N-linked (GlcNAc...) asparagine glycan.

It belongs to the glycosyltransferase 11 family.

The protein resides in the golgi apparatus. The protein localises to the golgi stack membrane. The catalysed reaction is a beta-D-galactosyl-(1-&gt;4)-N-acetyl-beta-D-glucosaminyl derivative + GDP-beta-L-fucose = an alpha-L-Fuc-(1-&gt;2)-beta-D-Gal-(1-&gt;4)-beta-D-GlcNAc derivative + GDP + H(+). It carries out the reaction a ganglioside GA1 + GDP-beta-L-fucose = a ganglioside Fuc-GA1 + GDP + H(+). The enzyme catalyses a beta-D-Gal-(1-&gt;3)-beta-D-GlcNAc-(1-&gt;3)-beta-D-Gal-(1-&gt;4)-beta-D-Glc-(1&lt;-&gt;1')-Cer(d18:1(4E)) + GDP-beta-L-fucose = alpha-L-fucosyl-(1-&gt;2)- beta-D-galactosyl-(1-&gt;3)-N-acetyl-beta-D-glucosaminyl-(1-&gt;3)-beta-D-galactosyl-(1-&gt;4)-beta-D-glucosyl-(1&lt;-&gt;1')-N-acylsphing-4-enine + GDP + H(+). It catalyses the reaction a neolactoside nLc4Cer(d18:1(4E)) + GDP-beta-L-fucose = a neolactoside IV(2)-alpha-Fuc-nLc4Cer(d18:1(4E)) + GDP + H(+). The catalysed reaction is a ganglioside GM1 + GDP-beta-L-fucose = a ganglioside Fuc-GM1 + GDP + H(+). It carries out the reaction beta-D-galactosyl-(1-&gt;3)-N-acetyl-D-galactosamine + GDP-beta-L-fucose = alpha-L-fucosyl-(1-&gt;2)-beta-D-galactosyl-(1-&gt;3)-N-acetyl-D-galactosamine + GDP + H(+). Its pathway is protein modification; protein glycosylation. Its function is as follows. Catalyzes the transfer of L-fucose, from a guanosine diphosphate-beta-L-fucose, to the terminal galactose residue of glycoconjugates through an alpha(1,2) linkage leading to H antigen synthesis that is an intermediate substrate in the synthesis of ABO blood group antigens. H antigen is essential for maturation of the glomerular layer of the main olfactory bulb, in cell migration and early cell-cell contacts during tumor associated angiogenesis. Preferentially fucosylates soluble lactose and to a lesser extent fucosylates glycolipids gangliosides GA1 and GM1a. This is Galactoside alpha-(1,2)-fucosyltransferase 1 from Gorilla gorilla gorilla (Western lowland gorilla).